Reading from the N-terminus, the 713-residue chain is MNIIAIMGPHGVFYKDEPIKELESALVAQGFQIIWPQNSVDLLKFIEHNPRICGVIFDWDEYSLDLCSDINQLNEYLPLYAFINTHSTMDVSVQDMRMALWFFEYALGQAEDIAIRMRQYTDEYLDNITPPFTKALFTYVKERKYTFCTPGHMGGTAYQKSPVGCLFYDFFGGNTLKADVSISVTELGSLLDHTGPHLEAEEYIARTFGAEQSYIVTNGTSTSNKIVGMYAAPSGSTLLIDRNCHKSLAHLLMMNDVVPVWLKPTRNALGILGGIPRREFTRDSIEEKVAATTQAQWPVHAVITNSTYDGLLYNTDWIKQTLDVPSIHFDSAWVPYTHFHPIYQGKSGMSGERVAGKVIFETQSTHKMLAALSQASLIHIKGEYDEEAFNEAFMMHTTTSPSYPIVASVETAAAMLRGNPGKRLINRSVERALHFRKEVQRLREESDGWFFDIWQPPQVDEAECWPVAPGEQWHGFNDADADHMFLDPVKVTILTPGMDEQGNMSEEGIPAALVAKFLDERGIVVEKTGPYNLLFLFSIGIDKTKAMGLLRGLTEFKRSYDLNLRIKNMLPDLYAEDPDFYRNMRIQDLAQGIHKLIRKHDLPGLMLRAFDTLPEMIMTPHQAWQRQIKGEVETIALEQLVGRVSANMILPYPPGVPLLMPGEMLTKESRTVLDFLLMLCSVGQHYPGFETDIHGAKQDEDGVYRVRVLKMAG.

Residue lysine 367 is modified to N6-(pyridoxal phosphate)lysine.

Belongs to the Orn/Lys/Arg decarboxylase class-I family. In terms of assembly, homodecamer; built of five dimers associated in a 5-fold symmetrical double-ring. It depends on pyridoxal 5'-phosphate as a cofactor.

It carries out the reaction L-lysine + H(+) = cadaverine + CO2. Its function is as follows. Plays a role in lysine utilization by acting as a lysine decarboxylase. This Escherichia coli (strain K12) protein is Constitutive lysine decarboxylase (ldcC).